The chain runs to 40 residues: Peroxisomal LYS1 stabilizing protein 1 (40 aa).

Positions 1-10 (MTAKTKQSWN) are enriched in polar residues. A disordered region spans residues 1–20 (MTAKTKQSWNKGIWENGKQG).

It is found in the cytoplasm. Its subcellular location is the cytosol. The protein resides in the peroxisome matrix. Functionally, modulates the lysine biosynthesis pathway, possibly by stabilizing the lysine biosynthesis LYS1 protein in lysine-deplete conditions. This is Peroxisomal LYS1 stabilizing protein 1 from Saccharomyces cerevisiae (strain ATCC 204508 / S288c) (Baker's yeast).